Consider the following 139-residue polypeptide: Plastocyanin (139 aa).

Residues 1–34 (MKLISASLRRFSLAVLTILLVVSSFAVFTPSASA) form the signal peptide. Positions 35-139 (ETYQVKLGTD…GMVGTITVQG (105 aa)) constitute a Plastocyanin-like domain. 4 residues coordinate Cu cation: histidine 73, cysteine 123, histidine 126, and methionine 131.

The protein belongs to the plastocyanin family. Cu(2+) is required as a cofactor.

Its subcellular location is the cellular thylakoid membrane. Functionally, participates in electron transfer between P700 and the cytochrome b6-f complex in photosystem I. This chain is Plastocyanin, found in Nostoc punctiforme (strain ATCC 29133 / PCC 73102).